Reading from the N-terminus, the 416-residue chain is Tryptophan synthase beta chain (416 aa).

The interval 1–23 (MTSTLPSQPKDMELANSSRPSVH) is disordered. K109 bears the N6-(pyridoxal phosphate)lysine mark.

It belongs to the TrpB family. Tetramer of two alpha and two beta chains. The cofactor is pyridoxal 5'-phosphate.

It carries out the reaction (1S,2R)-1-C-(indol-3-yl)glycerol 3-phosphate + L-serine = D-glyceraldehyde 3-phosphate + L-tryptophan + H2O. It participates in amino-acid biosynthesis; L-tryptophan biosynthesis; L-tryptophan from chorismate: step 5/5. In terms of biological role, the beta subunit is responsible for the synthesis of L-tryptophan from indole and L-serine. This chain is Tryptophan synthase beta chain, found in Prochlorococcus marinus (strain MIT 9211).